The following is a 689-amino-acid chain: Sodium-dependent phosphate transport protein 2B (689 aa).

The interval 1–41 (MAPWPELGDAQPNPDKYLEGAAGQQPTAPDKSKETNKNNTE) is disordered. The Cytoplasmic portion of the chain corresponds to 1–100 (MAPWPELGDA…LCVFQGIGRL (100 aa)). The helical transmembrane segment at 101-121 (ILLLGFLYFFVCSLDILSSAF) threads the bilayer. Residues 122–135 (QLVGGKMAGQFFSN) are Extracellular-facing. Residues 136 to 156 (SSIMSNPLLGLVIGVLVTVLV) traverse the membrane as a helical segment. Over 157–212 (QSSSTSTSIVVSMVSSSLLTVRAAIPIIMGANIGTSITNTIVALMQVGDRSEFRRA) the chain is Cytoplasmic. Residues 213-233 (FAGATVHDFFNWLSVLVLLPV) form a helical membrane-spanning segment. Over 234–362 (EVATHYLEII…FVNFHLPDLA (129 aa)) the chain is Extracellular. Residues asparagine 294, asparagine 307, and asparagine 320 are each glycosylated (N-linked (GlcNAc...) asparagine). A disulfide bridge links cysteine 302 with cysteine 349. Residues 363–383 (VGTILLILSLLVLCGCLIMIV) form a helical membrane-spanning segment. Over 384–407 (KILGSVLKGQVATVIKKTINTDFP) the chain is Cytoplasmic. Residues 408–428 (FPFAWLTGYLAILVGAGMTFI) form a helical membrane-spanning segment. The Extracellular segment spans residues 429 to 485 (VQSSSVFTSALTPLIGIGVITIERAYPLTLGSNIGTTTTAILAALASPGNALRSSLQ). The helical transmembrane segment at 486–506 (IALCHFFFNISGILLWYPIPF) threads the bilayer. The Cytoplasmic portion of the chain corresponds to 507–525 (TRLPIRMAKGLGNISAKYR). The chain crosses the membrane as a helical span at residues 526-546 (WFAVFYLIIFFFLIPLTVFGL). At 547–552 (SLAGWR) the chain is on the extracellular side. Residues 553–573 (VLVGVGVPVVFIIILVLCLRL) traverse the membrane as a helical segment. At 574–687 (LQSRCPRVLP…PASDSKTECT (114 aa)) the chain is on the cytoplasmic side.

The protein belongs to the SLC34A transporter family.

It localises to the apical cell membrane. It catalyses the reaction 3 Na(+)(out) + phosphate(out) = 3 Na(+)(in) + phosphate(in). Functionally, involved in actively transporting phosphate into cells via Na(+) cotransport. The polypeptide is Sodium-dependent phosphate transport protein 2B (SLC34A2) (Pongo abelii (Sumatran orangutan)).